Here is a 246-residue protein sequence, read N- to C-terminus: UPF0246 protein str1967 (246 aa).

This sequence belongs to the UPF0246 family.

This chain is UPF0246 protein str1967, found in Streptococcus thermophilus (strain CNRZ 1066).